Reading from the N-terminus, the 281-residue chain is MITSAHIDDIRTQVRAWRAKGETVAFVPTMGNLHQGHITLVKEAASKCDHVVASIFVNPMQFGQNEDLDAYPRTLAADSEALTAAGAELLFTPTPAVMYPKGLEQQTYVEVPGISNVLCGASRPGHFRGVATIVCKLFNIVQPDVALFGNKDYQQLLVIKTMVEDLSLPIEIIGVDTIREDSGLAMSSRNGYLTAAEKAAAPALKQAIDAMAAGIKQGESFEQMTEQAKACLVAAGFTPDYLEIRHAHTLEQAQNQDHALVILAAAYIGKARLIDNLRFDR.

Residue 30–37 participates in ATP binding; that stretch reads MGNLHQGH. Histidine 37 serves as the catalytic Proton donor. Residue glutamine 61 participates in (R)-pantoate binding. Glutamine 61 contributes to the beta-alanine binding site. ATP is bound at residue 149-152; it reads GNKD. Glutamine 155 serves as a coordination point for (R)-pantoate. ATP is bound by residues isoleucine 178 and 186 to 189; that span reads MSSR.

Belongs to the pantothenate synthetase family. In terms of assembly, homodimer.

Its subcellular location is the cytoplasm. It catalyses the reaction (R)-pantoate + beta-alanine + ATP = (R)-pantothenate + AMP + diphosphate + H(+). The protein operates within cofactor biosynthesis; (R)-pantothenate biosynthesis; (R)-pantothenate from (R)-pantoate and beta-alanine: step 1/1. Functionally, catalyzes the condensation of pantoate with beta-alanine in an ATP-dependent reaction via a pantoyl-adenylate intermediate. This Shewanella baltica (strain OS195) protein is Pantothenate synthetase.